The chain runs to 124 residues: Small ribosomal subunit protein bS6m (124 aa).

This sequence belongs to the bacterial ribosomal protein bS6 family. As to quaternary structure, component of the mitochondrial ribosome small subunit (28S) which comprises a 12S rRNA and about 30 distinct proteins.

The protein localises to the mitochondrion. This is Small ribosomal subunit protein bS6m (MRPS6) from Bos taurus (Bovine).